Here is a 22-residue protein sequence, read N- to C-terminus: Protein YncP (22 aa).

This is Protein YncP from Escherichia coli (strain K12).